Consider the following 80-residue polypeptide: Cell division activator CedA (80 aa).

The protein belongs to the CedA family.

Functionally, activates the cell division inhibited by chromosomal DNA over-replication. This is Cell division activator CedA from Escherichia coli (strain SMS-3-5 / SECEC).